The primary structure comprises 311 residues: Probable cell division protein WhiA (311 aa).

A DNA-binding region (H-T-H motif) is located at residues 277 to 311 (TLKEVADQIPDGPISKSGVNHRFKKLHELAETLKE).

Belongs to the WhiA family.

In terms of biological role, involved in cell division and chromosome segregation. The chain is Probable cell division protein WhiA from Lactobacillus helveticus (strain DPC 4571).